Consider the following 475-residue polypeptide: UDP-N-acetylmuramate--L-alanine ligase (475 aa).

112-118 serves as a coordination point for ATP; the sequence is GTHGKTT.

It belongs to the MurCDEF family.

Its subcellular location is the cytoplasm. The catalysed reaction is UDP-N-acetyl-alpha-D-muramate + L-alanine + ATP = UDP-N-acetyl-alpha-D-muramoyl-L-alanine + ADP + phosphate + H(+). It functions in the pathway cell wall biogenesis; peptidoglycan biosynthesis. In terms of biological role, cell wall formation. The polypeptide is UDP-N-acetylmuramate--L-alanine ligase (Cupriavidus pinatubonensis (strain JMP 134 / LMG 1197) (Cupriavidus necator (strain JMP 134))).